A 269-amino-acid polypeptide reads, in one-letter code: 2' cyclic ADP-D-ribose synthase AbTIR (269 aa).

Positions L31–Q99 form a coiled coil. The TIR domain occupies P133–I266. Residues S143, K172, and K202 each contribute to the NAD(+) site. E208 is an active-site residue. Residue K245 coordinates NAD(+).

As to quaternary structure, homodimer. In the presence of NAD(+) analog 8-amino-isoquinoline adenine dinucleotide (3AD) forms filaments with 3AD between monomers; conformational changes occur upon 3AD binding.

It carries out the reaction NAD(+) = 2'cADPR + nicotinamide + H(+). The enzyme catalyses NAD(+) + H2O = ADP-D-ribose + nicotinamide + H(+). The catalysed reaction is NADP(+) + H2O = ADP-D-ribose 2'-phosphate + nicotinamide + H(+). Its function is as follows. NAD(+) hydrolase (NADase) that catalyzes cleavage of NAD(+) into ADP-D-ribose (ADPR) and nicotinamide. In addition to ADPR, also generates a cyclization variant of cyclic ADPR (cADPR), termed 2'cADPR (v-cADPR). Cleaves NADP(+), but does not cyclize the product. The polypeptide is 2' cyclic ADP-D-ribose synthase AbTIR (Acinetobacter baumannii (strain 1295743)).